A 615-amino-acid chain; its full sequence is 1-deoxy-D-xylulose-5-phosphate synthase (615 aa).

Thiamine diphosphate-binding positions include His76 and 117-119 (GHS). Asp148 contacts Mg(2+). Thiamine diphosphate-binding positions include 149-150 (GA), Asn177, Tyr284, and Glu365. Residue Asn177 participates in Mg(2+) binding.

It belongs to the transketolase family. DXPS subfamily. In terms of assembly, homodimer. Mg(2+) is required as a cofactor. The cofactor is thiamine diphosphate.

It catalyses the reaction D-glyceraldehyde 3-phosphate + pyruvate + H(+) = 1-deoxy-D-xylulose 5-phosphate + CO2. The protein operates within metabolic intermediate biosynthesis; 1-deoxy-D-xylulose 5-phosphate biosynthesis; 1-deoxy-D-xylulose 5-phosphate from D-glyceraldehyde 3-phosphate and pyruvate: step 1/1. Catalyzes the acyloin condensation reaction between C atoms 2 and 3 of pyruvate and glyceraldehyde 3-phosphate to yield 1-deoxy-D-xylulose-5-phosphate (DXP). The sequence is that of 1-deoxy-D-xylulose-5-phosphate synthase from Francisella tularensis subsp. novicida (strain U112).